The primary structure comprises 177 residues: Protein VERNALIZATION 3 (177 aa).

It belongs to the phosphatidylethanolamine-binding protein family. Expressed in leaves but not in shoot apex.

Functionally, involved in the regulation of vernalization and of flowering time; this process in essential for flowering in cv. Bd29-1 but seems do not occur in cv. Bd21. The protein is Protein VERNALIZATION 3 of Brachypodium distachyon (Purple false brome).